A 959-amino-acid chain; its full sequence is MTEAKSYKDTVNLPQTKFDMRANAVKREPELQKFWAENQIYETLSENNPGDIFILHDGPPYANGSLHMGHALNKTLKDIINKYKLQRGYKARYVPGWDCHGLPIELKVLQSMKQKEREDLTPLKLRHKARDFALSTQKEQSESFQRFGVWGDWEHPYLTLTPDYEAAQIGVFGQMALKGYIYRGLKPVHWSPSSQTALAEAELEYPEGHTSRSVYAVFPITKASDTAKKVLTPYLKDLGVAIWTTTPWTLPGNLAVALNPDLTYAVVESGKPVCKHQYFIVAADLVDKLSATFETPLTVKATLKGEDLEHTTYRHPLFDRESEILIGGDYVTTESGTGLVHTAPGHGQEDYIVGQRYGLPVLSPVDEKGNFTSEAGQFAGLNVLKDANEAIIKELEEKGALLKEEPYQHKYPYDWRTKKPTIFRATEQWFASVEGFRDTALEAIKNVTWIPPQGENRITPMVADRSDWCISRQRSWGVPIPVFYDEETNEPLLNEETINHVQAIFAEKGSDAWWELSVEELLPQPYRNNGRKYRKGMDTMDVWFDSGSSWAAVAKQRPELSYPVDIYLEGSDQHRGWFQSSLLTSVATNGIAPYKMVLTHGFVLDEQGRKMSKSIGNIVDPNMIINGGKDQKKEPAYGADVLRLWVSSVDYSSDVPIGQNILKQLVDVRNKIRNTARFLLGNLHDFDPEKDTVAYEDLPELDRYMLHRITEVFTEVTEAFETFQFFRFFQVVQNFCVVDLSNFYLDIAKDRLYISDPNNLRRRSCQTVLKVALENLAKSIAPVLCHLAEDIWQFLPYKTPYKSVFEAGWVELESEWKRPELTPKWSKFRQIRDEVNKVMELARKDKMIGSSLDAKVLLYVSDKELREHLDSFNPSDSLSNNRVDELRYLFLASQVDLVDSPKTIGKANYKSESETLGVAIVKADGEKCDRCWNYSTHVGEFVDDPTLCERCNAALKGEF.

Positions 60 to 70 match the 'HIGH' region motif; sequence PYANGSLHMGH. E569 is an L-isoleucyl-5'-AMP binding site. The 'KMSKS' region signature appears at 610 to 614; it reads KMSKS. K613 contacts ATP. The Zn(2+) site is built by C928, C931, C948, and C951.

It belongs to the class-I aminoacyl-tRNA synthetase family. IleS type 1 subfamily. Monomer. It depends on Zn(2+) as a cofactor.

Its subcellular location is the cytoplasm. The catalysed reaction is tRNA(Ile) + L-isoleucine + ATP = L-isoleucyl-tRNA(Ile) + AMP + diphosphate. In terms of biological role, catalyzes the attachment of isoleucine to tRNA(Ile). As IleRS can inadvertently accommodate and process structurally similar amino acids such as valine, to avoid such errors it has two additional distinct tRNA(Ile)-dependent editing activities. One activity is designated as 'pretransfer' editing and involves the hydrolysis of activated Val-AMP. The other activity is designated 'posttransfer' editing and involves deacylation of mischarged Val-tRNA(Ile). The polypeptide is Isoleucine--tRNA ligase (Gloeothece citriformis (strain PCC 7424) (Cyanothece sp. (strain PCC 7424))).